Reading from the N-terminus, the 253-residue chain is Spermatogenesis-associated protein 9 (253 aa).

Residues 144 to 166 (LTSIMCASYAALIYLTVCVNAVL) traverse the membrane as a helical segment. The segment covering 210–228 (AKPYRSLPEKPDSISDRPK) has biased composition (basic and acidic residues). Residues 210 to 231 (AKPYRSLPEKPDSISDRPKLPA) form a disordered region.

Its subcellular location is the membrane. May play at role in testicular development/spermatogenesis and may be an important factor in male infertility. The protein is Spermatogenesis-associated protein 9 (SPATA9) of Bos taurus (Bovine).